Reading from the N-terminus, the 187-residue chain is V-type ATP synthase subunit E (187 aa).

This sequence belongs to the V-ATPase E subunit family.

In terms of biological role, produces ATP from ADP in the presence of a proton gradient across the membrane. The sequence is that of V-type ATP synthase subunit E from Clostridioides difficile (strain 630) (Peptoclostridium difficile).